We begin with the raw amino-acid sequence, 218 residues long: Ribose-5-phosphate isomerase A (218 aa).

Substrate-binding positions include 28 to 31, 81 to 84, and 94 to 97; these read TGST, DGAD, and KGGG. Residue E103 is the Proton acceptor of the active site. Residue K121 participates in substrate binding.

The protein belongs to the ribose 5-phosphate isomerase family. Homodimer.

It catalyses the reaction aldehydo-D-ribose 5-phosphate = D-ribulose 5-phosphate. The protein operates within carbohydrate degradation; pentose phosphate pathway; D-ribose 5-phosphate from D-ribulose 5-phosphate (non-oxidative stage): step 1/1. Functionally, catalyzes the reversible conversion of ribose-5-phosphate to ribulose 5-phosphate. The chain is Ribose-5-phosphate isomerase A from Vibrio parahaemolyticus serotype O3:K6 (strain RIMD 2210633).